The sequence spans 572 residues: Transmembrane glycoprotein NMB (572 aa).

Residues 1-22 (MECLYYFLGFLLLAARLPLDAA) form the signal peptide. Residues 23–498 (KRFHDVLGNE…DPASPLRMAN (476 aa)) are Extracellular-facing. A Cell attachment site motif is present at residues 64–66 (RGD). Residues Asn93, Asn134, Asn146, Asn200, Asn249, Asn275, Asn296, Asn300, Asn306, and Asn312 are each glycosylated (N-linked (GlcNAc...) asparagine). In terms of domain architecture, PKD spans 240-327 (VTMFQKNDRN…AAPGPCPPPP (88 aa)). Residues 320–362 (PGPCPPPPPPPRPSKPTPSLATTLKSYDSNTPGPAGDNPLELS) form a disordered region. A compositionally biased stretch (pro residues) spans 321 to 335 (GPCPPPPPPPRPSKP). The segment covering 338-351 (SLATTLKSYDSNTP) has biased composition (polar residues). N-linked (GlcNAc...) asparagine glycosylation is found at Asn459 and Asn467. The chain crosses the membrane as a helical span at residues 499-519 (SALISVGCLAIFVTVISLLVY). At 520 to 572 (KKHKEYNPIENSPGNVVRSKGLSVFLNRAKAVFFPGNQEKDPLLKNQEFKGVS) the chain is on the cytoplasmic side. A Phosphoserine modification is found at Ser542.

It belongs to the PMEL/NMB family. In terms of tissue distribution, widely expressed, but very low expression, if any, in the brain. Expressed in the epidermis with higher levels in melanocytes compared with keratinocytes and Langerhans cells (at protein level). Expressed in peripheral blood, but not bone marrow mononuclear cells. Expressed in tissue macrophages, including liver Kuppfer cells and lung alveolar macrophages, in podocytes and in some cells of the ciliary body of the eye (at protein level). May be overexpressed in various cancers, including melanoma and glioblastoma multiforme.

Its subcellular location is the cell membrane. It is found in the melanosome membrane. It localises to the early endosome membrane. Functionally, could be a melanogenic enzyme. The polypeptide is Transmembrane glycoprotein NMB (GPNMB) (Homo sapiens (Human)).